A 136-amino-acid polypeptide reads, in one-letter code: ATP synthase epsilon chain (136 aa).

This sequence belongs to the ATPase epsilon chain family. In terms of assembly, F-type ATPases have 2 components, CF(1) - the catalytic core - and CF(0) - the membrane proton channel. CF(1) has five subunits: alpha(3), beta(3), gamma(1), delta(1), epsilon(1). CF(0) has three main subunits: a, b and c.

It is found in the cell membrane. Produces ATP from ADP in the presence of a proton gradient across the membrane. The protein is ATP synthase epsilon chain of Macrococcus caseolyticus (strain JCSC5402) (Macrococcoides caseolyticum).